Consider the following 283-residue polypeptide: Ribonuclease P protein subunit p38 (283 aa).

A2 is modified (N-acetylalanine). Phosphoserine occurs at positions 12, 226, and 235.

The protein belongs to the eukaryotic ribosomal protein eL8 family. As to quaternary structure, component of nuclear RNase P and RNase MRP ribonucleoproteins. RNase P consists of a catalytic RNA moiety and about 10 protein subunits; POP1, POP4, POP5, POP7, RPP14, RPP21, RPP25, RPP30, RPP38 and RPP40. Within the RNase P complex, POP1, POP7 and RPP25 form the 'finger' subcomplex, POP5, RPP14, RPP40 and homodimeric RPP30 form the 'palm' subcomplex, and RPP21, POP4 and RPP38 form the 'wrist' subcomplex. All subunits of the RNase P complex interact with the catalytic RNA. Several subunits of RNase P are also part of the RNase MRP complex. RNase MRP consists of a catalytic RNA moiety and about 8 protein subunits; POP1, POP7, RPP25, RPP30, RPP38, RPP40 and possibly also POP4 and POP5.

Its subcellular location is the nucleus. The protein localises to the nucleolus. Its function is as follows. Component of ribonuclease P, a ribonucleoprotein complex that generates mature tRNA molecules by cleaving their 5'-ends. Also a component of the MRP ribonuclease complex, which cleaves pre-rRNA sequences. In Homo sapiens (Human), this protein is Ribonuclease P protein subunit p38 (RPP38).